A 32-amino-acid chain; its full sequence is Dermatoxin-J1 (32 aa).

Q32 bears the Glutamine amide mark.

As to expression, expressed by the skin glands.

It is found in the secreted. Functionally, antimicrobial peptide. This chain is Dermatoxin-J1, found in Phasmahyla jandaia (Jandaia leaf frog).